The primary structure comprises 780 residues: Gelsolin (780 aa).

M1 carries the N-acetylmethionine; alternate modification. The signal sequence occupies residues 1–25 (MAPYRSSLLCALLLLALCALSPSHA). Positions 51–174 (VVEHPEFLKA…YKKGGVASGF (124 aa)) are actin-severing. One copy of the Gelsolin-like 1 repeat lies at 74–155 (FDLVPVPPNL…EVQGFESSTF (82 aa)). Y84 carries the phosphotyrosine modification. The Ca(2+) site is built by G90, D91, E122, D134, G139, and A141. Residues 121–124 (DESG) form an actin-actin interfilament contact point region. Residue 160–167 (KSGLKYKK) participates in a 1,2-diacyl-sn-glycero-3-phospho-(1D-myo-inositol-4,5-bisphosphate) binding. V170 serves as a coordination point for Ca(2+). A 1,2-diacyl-sn-glycero-3-phospho-(1D-myo-inositol-4,5-bisphosphate) is bound at residue 186–194 (RLFQVKGRR). The stretch at 196 to 268 (VRATEVPVSW…SEEGGEPEAM (73 aa)) is one Gelsolin-like 2 repeat. Residues G211 and D212 each coordinate Ca(2+). A disulfide bridge links C213 with C226. Residue E234 participates in Ca(2+) binding. Residues 244–269 (GIRDNERSGRAQVHVSEEGGEPEAML) are disordered. Ca(2+) is bound by residues D284, E327, D328, and E352. One copy of the Gelsolin-like 3 repeat lies at 315–387 (DENPFAQGAL…LPEGGETPLF (73 aa)). Phosphotyrosine is present on residues Y407 and Y463. The interval 432-780 (AAQHGMDDDG…LDRALAELAA (349 aa)) is actin-binding, Ca-sensitive. A Gelsolin-like 4 repeat occupies 453 to 534 (SNKVPVDPAT…VQGKEPAHLM (82 aa)). Ca(2+)-binding residues include G469, D470, E500, D512, G517, P519, and T549. One copy of the Gelsolin-like 5 repeat lies at 575 to 640 (RAVEVMPKSG…EEGSEPDAFW (66 aa)). K582 carries the N6-acetyllysine modification. 2 residues coordinate Ca(2+): N589 and D590. Position 601 is a phosphotyrosine (Y601). E612 provides a ligand contact to Ca(2+). The residue at position 649 (Y649) is a Phosphotyrosine. Residues 679-754 (IEEVPGELMQ…VRQGFEPPSF (76 aa)) form a Gelsolin-like 6 repeat. Residues D694, D695, and E717 each coordinate Ca(2+). The residue at position 740 (T740) is a Phosphothreonine.

Belongs to the villin/gelsolin family. Binds to actin and to fibronectin. Identified in a complex composed of ACTA1, COBL, GSN and TMSB4X. Interacts with the inactive form of EIF2AK2/PKR. Interacts with FLII. Post-translationally, phosphorylated on tyrosine residues in vitro.

Its subcellular location is the cytoplasm. The protein localises to the cytoskeleton. It is found in the secreted. Functionally, calcium-regulated, actin-modulating protein that binds to the plus (or barbed) ends of actin monomers or filaments, preventing monomer exchange (end-blocking or capping). It can promote the assembly of monomers into filaments (nucleation) as well as sever filaments already formed. Plays a role in ciliogenesis. The sequence is that of Gelsolin (Gsn) from Mus musculus (Mouse).